Here is a 749-residue protein sequence, read N- to C-terminus: Homeobox-leucine zipper protein ROC7 (749 aa).

A disordered region spans residues 26 to 98 (LDQHQQHQHQ…KKRYHRHTQH (73 aa)). A compositionally biased stretch (basic and acidic residues) spans 46-57 (SDGRAPRDELEM). The span at 68 to 79 (SGGGGGGGGSGG) shows a compositional bias: gly residues. Residues 86 to 97 (RPRKKRYHRHTQ) are compositionally biased toward basic residues. The homeobox DNA-binding region spans 88–147 (RKKRYHRHTQHQIQELEAFFKECPHPDDKQRKELSRELGLEPLQVKFWFQNKRTQMKTQH). Residues 137 to 218 (QNKRTQMKTQ…DRISAIAAKY (82 aa)) adopt a coiled-coil conformation. The START domain maps to 256 to 494 (ADFDKPLVIE…LERQCERLAS (239 aa)).

It belongs to the HD-ZIP homeobox family. Class IV subfamily.

It localises to the nucleus. Functionally, probable transcription factor. This Oryza sativa subsp. japonica (Rice) protein is Homeobox-leucine zipper protein ROC7 (ROC7).